Here is a 777-residue protein sequence, read N- to C-terminus: Endonuclease MutS2 (777 aa).

328 to 335 (GPNTGGKT) is an ATP binding site. A Smr domain is found at 702-777 (LDLRGKRYEE…GSGCTIATLG (76 aa)).

This sequence belongs to the DNA mismatch repair MutS family. MutS2 subfamily. Homodimer. Binds to stalled ribosomes, contacting rRNA.

Endonuclease that is involved in the suppression of homologous recombination and thus may have a key role in the control of bacterial genetic diversity. In terms of biological role, acts as a ribosome collision sensor, splitting the ribosome into its 2 subunits. Detects stalled/collided 70S ribosomes which it binds and splits by an ATP-hydrolysis driven conformational change. Acts upstream of the ribosome quality control system (RQC), a ribosome-associated complex that mediates the extraction of incompletely synthesized nascent chains from stalled ribosomes and their subsequent degradation. Probably generates substrates for RQC. The sequence is that of Endonuclease MutS2 from Streptococcus uberis (strain ATCC BAA-854 / 0140J).